The following is a 1592-amino-acid chain: ABC transporter ATP-binding protein/permease VMR1 (1592 aa).

The Vacuolar segment spans residues methionine 1 to leucine 33. Asparagine 11 carries an N-linked (GlcNAc...) asparagine glycan. The chain crosses the membrane as a helical span at residues proline 34–tyrosine 54. Residues valine 55 to arginine 74 lie on the Cytoplasmic side of the membrane. A helical transmembrane segment spans residues lysine 75–asparagine 95. Over valine 96–glycine 100 the chain is Vacuolar. A helical membrane pass occupies residues arginine 101–lysine 121. The Cytoplasmic portion of the chain corresponds to asparagine 122–proline 131. The helical transmembrane segment at serine 132 to glycine 152 threads the bilayer. The Vacuolar segment spans residues leucine 153 to valine 170. Residues threonine 171 to arginine 191 form a helical membrane-spanning segment. The Cytoplasmic segment spans residues serine 192–alanine 329. Residues leucine 330 to isoleucine 350 traverse the membrane as a helical segment. Residues leucine 338–glutamine 632 enclose the ABC transmembrane type-1 1 domain. The Vacuolar segment spans residues valine 351–alanine 379. Asparagine 370 carries an N-linked (GlcNAc...) asparagine glycan. The helical transmembrane segment at tryptophan 380–glycine 400 threads the bilayer. The Cytoplasmic portion of the chain corresponds to glutamine 401–tyrosine 465. A helical transmembrane segment spans residues leucine 466 to phenylalanine 486. Residues leucine 487–valine 489 lie on the Vacuolar side of the membrane. A helical membrane pass occupies residues serine 490–asparagine 510. Over leucine 511–serine 572 the chain is Cytoplasmic. The chain crosses the membrane as a helical span at residues valine 573–cysteine 593. The Vacuolar portion of the chain corresponds to threonine 594–threonine 614. A helical membrane pass occupies residues leucine 615–valine 635. Residues serine 636–isoleucine 989 are Cytoplasmic-facing. Residues isoleucine 664–leucine 908 enclose the ABC transporter 1 domain. Glycine 702–serine 709 contacts ATP. Positions leucine 981–methionine 1282 constitute an ABC transmembrane type-1 2 domain. Residues threonine 990–asparagine 1010 traverse the membrane as a helical segment. The Vacuolar portion of the chain corresponds to valine 1011–isoleucine 1051. A helical membrane pass occupies residues glutamine 1052–arginine 1072. The Cytoplasmic segment spans residues lysine 1073 to proline 1115. Residues tyrosine 1116–valine 1136 traverse the membrane as a helical segment. A topological domain (vacuolar) is located at residue isoleucine 1137. A helical membrane pass occupies residues threonine 1138–tryptophan 1158. Topologically, residues tyrosine 1159–valine 1229 are cytoplasmic. Residues aspartate 1230–asparagine 1250 form a helical membrane-spanning segment. Topologically, residues isoleucine 1251 to aspartate 1252 are vacuolar. The helical transmembrane segment at serine 1253–leucine 1273 threads the bilayer. The Cytoplasmic segment spans residues valine 1274–lysine 1592. In terms of domain architecture, ABC transporter 2 spans isoleucine 1323–arginine 1572. Glycine 1357 to serine 1364 is an ATP binding site.

The protein belongs to the ABC transporter superfamily. In terms of assembly, ABC transporter which may be involved in multidrug resistance.

Its subcellular location is the vacuole membrane. This chain is ABC transporter ATP-binding protein/permease VMR1 (VMR1), found in Saccharomyces cerevisiae (strain ATCC 204508 / S288c) (Baker's yeast).